Consider the following 305-residue polypeptide: Probable cell division protein WhiA (305 aa).

The segment at residues 269–302 is a DNA-binding region (H-T-H motif); it reads TIKELGELLDPPLGKSGVNHRLRKLVERSNDLKK.

The protein belongs to the WhiA family.

In terms of biological role, involved in cell division and chromosome segregation. This chain is Probable cell division protein WhiA, found in Lactococcus lactis subsp. cremoris (strain MG1363).